The chain runs to 66 residues: Putative alpha-neurotoxin RjAa13 (66 aa).

The region spanning lysine 1–arginine 60 is the LCN-type CS-alpha/beta domain. Intrachain disulfides connect cysteine 11–cysteine 59, cysteine 15–cysteine 35, cysteine 21–cysteine 42, and cysteine 25–cysteine 44.

The protein belongs to the long (4 C-C) scorpion toxin superfamily. Sodium channel inhibitor family. Alpha subfamily. In terms of tissue distribution, expressed by the venom gland.

Its subcellular location is the secreted. In terms of biological role, alpha toxins bind voltage-independently at site-3 of sodium channels (Nav) and inhibits the inactivation of the activated channels, thereby blocking neuronal transmission. This chain is Putative alpha-neurotoxin RjAa13, found in Rhopalurus junceus (Caribbean blue scorpion).